Here is a 492-residue protein sequence, read N- to C-terminus: Amphoterin-induced protein 1 (492 aa).

An N-terminal signal peptide occupies residues 1–27; it reads MQPQRDLRGLWLLLLSVFLLLFEVARA. Positions 28–61 constitute an LRRNT domain; it reads GRSVVSCPANCLCASNILSCSKQQLPNVPQSLPS. Residues 28 to 371 lie on the Extracellular side of the membrane; it reads GRSVVSCPAN…LHGHHDTLNT (344 aa). 2 disulfides stabilise this stretch: Cys34-Cys40 and Cys38-Cys47. 6 LRR repeats span residues 62-83, 87-108, 111-132, 135-156, 159-180, and 186-206; these read YTAL…WTPT, NLHS…AFVP, NLRY…LFSD, ALEV…AFED, QLQK…LIKD, and KLML…TDLQ. N-linked (GlcNAc...) asparagine glycosylation occurs at Asn72. The 65-residue stretch at 208–272 folds into the LRRCT domain; sequence LPAWVKNGLY…FSLDFFNCSE (65 aa). Intrachain disulfides connect Cys225–Cys253, Cys227–Cys270, and Cys290–Cys340. N-linked (GlcNAc...) asparagine glycosylation is found at Asn269, Asn315, Asn348, and Asn359. The region spanning 269-352 is the Ig-like C2-type domain; sequence NCSEYKESAW…MGETFNETLS (84 aa). Residues 372–392 form a helical membrane-spanning segment; the sequence is AYTTLVGCILSVVLVLIYLYL. Over 393–492 the chain is Cytoplasmic; sequence TPCRCWCRGV…SVFSDTPIVV (100 aa). The segment at 404 to 492 is disordered; it reads KPSSHQGDSL…SVFSDTPIVV (89 aa). Residues 407–423 show a composition bias toward polar residues; it reads SHQGDSLSSSMLSTTPN. A compositionally biased stretch (basic and acidic residues) spans 430 to 441; sequence GDKDDGFDRRVA. Phosphoserine is present on residues Ser476 and Ser480.

The protein belongs to the immunoglobulin superfamily. AMIGO family. Homodimer, and heterodimer with AMIGO2 and AMIGO3. Interacts with KCNB1. As to expression, expressed in hippocampal and cortical neurons (at protein level). High levels in cerebellum, cerebrum, and retina. Low levels in liver, kidney, small intestine, spleen, lung and heart.

It localises to the cell membrane. It is found in the perikaryon. The protein localises to the cell projection. Its subcellular location is the dendrite. Functionally, promotes growth and fasciculation of neurites from cultured hippocampal neurons. May be involved in fasciculation as well as myelination of developing neural axons. May have a role in regeneration as well as neural plasticity in the adult nervous system. May mediate homophilic as well as heterophilic cell-cell interaction and contribute to signal transduction through its intracellular domain. Assembled with KCNB1 modulates the gating characteristics of the delayed rectifier voltage-dependent potassium channel KCNB1. The protein is Amphoterin-induced protein 1 of Mus musculus (Mouse).